We begin with the raw amino-acid sequence, 227 residues long: MAPCHIRKYQESDRQWVVGLLSRGMAEHAPATFRQLLKLPRTLILLLGGPLALLLVSGSWLLALVFSISLFPALWFLAKKPWTEYVDMTLCTDMSDITKSYLSERGSCFWVAESEEKVVGMVGALPVDDPTLREKRLQLFHLFVDSEHRRQGIAKALVRTVLQFARDQGYSEVILDTGTIQLSAMALYQSMGFKKTGQSFFCVWARLVALHTVHFIYHLPSSKVGSL.

Residues 1-42 (MAPCHIRKYQESDRQWVVGLLSRGMAEHAPATFRQLLKLPRT) are Cytoplasmic-facing. A helical; Signal-anchor for type II membrane protein transmembrane segment spans residues 43-63 (LILLLGGPLALLLVSGSWLLA). Residues 61–220 (LLALVFSISL…HTVHFIYHLP (160 aa)) form the N-acetyltransferase domain. Residues 64-227 (LVFSISLFPA…HLPSSKVGSL (164 aa)) lie on the Lumenal side of the membrane.

This sequence belongs to the NAT8 family. Preferentially expressed in liver and kidney. Also detected in brain (at protein level).

It localises to the endoplasmic reticulum-Golgi intermediate compartment membrane. The protein localises to the endoplasmic reticulum membrane. It carries out the reaction L-lysyl-[protein] + acetyl-CoA = N(6)-acetyl-L-lysyl-[protein] + CoA + H(+). The catalysed reaction is an S-substituted L-cysteine + acetyl-CoA = an N-acetyl-L-cysteine-S-conjugate + CoA + H(+). It functions in the pathway sulfur metabolism; glutathione metabolism. Its function is as follows. Endoplasmic reticulum (ER)-membrane-bound lysine N-acetyltransferase catalyzing the N6-acetylation of lysine residues in the lumen of the ER in various proteins, including PROM1 and BACE1, using acetyl-CoA as acetyl donor. Thereby, may regulate apoptosis through the acetylation and the regulation of the expression of PROM1. May also regulate amyloid beta-peptide secretion through acetylation of BACE1 and the regulation of its expression in neurons. N(6)-lysine acetylation in the ER maintains protein homeostasis and regulates reticulophagy. Alternatively, acetylates the free alpha-amino group of cysteine S-conjugates to form mercapturic acids. This is the final step in a major route for detoxification of a wide variety of reactive electrophiles which starts with their incorporation into glutathione S-conjugates. The glutathione S-conjugates are then further processed into cysteine S-conjugates and finally mercapturic acids which are water soluble and can be readily excreted in urine or bile. The polypeptide is N-acetyltransferase 8 (Homo sapiens (Human)).